Consider the following 357-residue polypeptide: U5 small nuclear ribonucleoprotein 40 kDa protein (357 aa).

Residue Lys18 forms a Glycyl lysine isopeptide (Lys-Gly) (interchain with G-Cter in SUMO2) linkage. The residue at position 21 (Arg21) is an Asymmetric dimethylarginine. WD repeat units lie at residues 64 to 103 (GHEG…DNYA), 107 to 146 (GHSG…RVKR), 149 to 189 (GHTS…AIQT), 191 to 230 (QNTY…LTYT), 233 to 272 (GHAD…PKER), 283 to 322 (NFEK…ILYK), and 325 to 357 (GHAG…GEIQ). Lys270 is covalently cross-linked (Glycyl lysine isopeptide (Lys-Gly) (interchain with G-Cter in SUMO2)).

As to quaternary structure, component of the pre-catalytic and catalytic spliceosome complexes. Component of the postcatalytic spliceosome P complex. Part of the U5 snRNP complex. Interacts with PRPF8. Component of the U4/U6-U5 tri-snRNP complex composed of the U4, U6 and U5 snRNAs and at least PRPF3, PRPF4, PRPF6, PRPF8, PRPF31, SNRNP200, TXNL4A, WDR57, SNRNP40, DDX23, CD2BP2, PPIH, SNU13, EFTUD2, SART1 and USP39. Component of the minor spliceosome, which splices U12-type introns.

The protein resides in the nucleus. Its function is as follows. Required for pre-mRNA splicing as component of the activated spliceosome. Component of the U5 small nuclear ribonucleoprotein (snRNP) complex and the U4/U6-U5 tri-snRNP complex, building blocks of the spliceosome. As a component of the minor spliceosome, involved in the splicing of U12-type introns in pre-mRNAs. This chain is U5 small nuclear ribonucleoprotein 40 kDa protein (SNRNP40), found in Homo sapiens (Human).